A 264-amino-acid chain; its full sequence is tRNA (guanine-N(7)-)-methyltransferase (264 aa).

The interval methionine 1–proline 39 is disordered. Over residues threonine 18–alanine 31 the composition is skewed to low complexity. Glutamate 94, glutamate 119, aspartate 146, and aspartate 169 together coordinate S-adenosyl-L-methionine. The active site involves aspartate 169. Substrate contacts are provided by residues lysine 173, aspartate 205, and threonine 240–glutamate 243.

This sequence belongs to the class I-like SAM-binding methyltransferase superfamily. TrmB family.

The enzyme catalyses guanosine(46) in tRNA + S-adenosyl-L-methionine = N(7)-methylguanosine(46) in tRNA + S-adenosyl-L-homocysteine. Its pathway is tRNA modification; N(7)-methylguanine-tRNA biosynthesis. Its function is as follows. Catalyzes the formation of N(7)-methylguanine at position 46 (m7G46) in tRNA. The protein is tRNA (guanine-N(7)-)-methyltransferase of Burkholderia mallei (strain ATCC 23344).